We begin with the raw amino-acid sequence, 108 residues long: UPF0060 membrane protein YnfA (108 aa).

Residues 1–5 (MIKTT) lie on the Periplasmic side of the membrane. The helical transmembrane segment at 6–26 (LLFFATALCEIIGCFLPWLWL) threads the bilayer. The Cytoplasmic segment spans residues 27 to 30 (KRNA). Residues 31–51 (SIWLLLPAGISLALFVWLLTL) form a helical membrane-spanning segment. Topologically, residues 52–60 (HPAASGRVY) are periplasmic. Residues 61–81 (AAYGGVYVCTALMWLRVVDGV) traverse the membrane as a helical segment. At 82 to 84 (KLS) the chain is on the cytoplasmic side. A helical membrane pass occupies residues 85–105 (LYDWTGALIALCGMLIIVAGW). The Periplasmic segment spans residues 106–108 (GRT).

The protein belongs to the UPF0060 family.

The protein localises to the cell inner membrane. The polypeptide is UPF0060 membrane protein YnfA (Shigella flexneri serotype 5b (strain 8401)).